The following is a 336-amino-acid chain: Nitrilase (336 aa).

The CN hydrolase domain occupies 5–278 (LKVACVQAAP…EGLLYATLDP (274 aa)). Glutamate 45 functions as the Proton acceptor in the catalytic mechanism. The Proton donor role is filled by lysine 127. Cysteine 161 acts as the Nucleophile in catalysis.

This sequence belongs to the carbon-nitrogen hydrolase superfamily. Nitrilase family.

The catalysed reaction is a nitrile + 2 H2O = a carboxylate + NH4(+). It carries out the reaction (indol-3-yl)acetonitrile + 2 H2O = (indol-3-yl)acetate + NH4(+). The enzyme catalyses phenylpropanonitrile + 2 H2O = 3-phenylpropanoate + NH4(+). Arylacetonitrilase which is capable of hydrolyzing indole-3-acetonitrile (IAN) to the plant hormone indole-3-acetate (IAA), and allows the plant pathogenic bacterium to use IAN as a sole nitrogen source. Is also able to hydrolyze phenylpropionitrile (PPN), allowing the use of this compound as a sole nitrogen source. This enzyme may represent an additional mechanism for IAA biosynthesis or may be used to degrade and assimilate aldoximes and nitriles produced during host plant secondary metabolism. This Pseudomonas syringae pv. syringae (strain B728a) protein is Nitrilase.